We begin with the raw amino-acid sequence, 269 residues long: GTP cyclohydrolase FolE2 (269 aa).

This sequence belongs to the GTP cyclohydrolase IV family.

It catalyses the reaction GTP + H2O = 7,8-dihydroneopterin 3'-triphosphate + formate + H(+). It participates in cofactor biosynthesis; 7,8-dihydroneopterin triphosphate biosynthesis; 7,8-dihydroneopterin triphosphate from GTP: step 1/1. Functionally, converts GTP to 7,8-dihydroneopterin triphosphate. In Burkholderia thailandensis (strain ATCC 700388 / DSM 13276 / CCUG 48851 / CIP 106301 / E264), this protein is GTP cyclohydrolase FolE2.